We begin with the raw amino-acid sequence, 150 residues long: Large ribosomal subunit protein bL9 (150 aa).

This sequence belongs to the bacterial ribosomal protein bL9 family.

Functionally, binds to the 23S rRNA. The protein is Large ribosomal subunit protein bL9 of Streptococcus pyogenes serotype M18 (strain MGAS8232).